The chain runs to 308 residues: MSEEKNYELWLDNYFFKPNFWQKCLAFILLPLSVFYAFFAILNTFFRKKIVFKKPVISVGNLSFGGNGKTPLCKAIAREFDGVFIVLRGYKRKSKGLFVVKNQNEILCTLTQSGDEAMEYAFEENIKGVIVSEDRVKGIEKAFELGAKIVVLDDAFSKFHIKKFDILLESKIKPYFNFTLPSGAYRLPKFYEKRADFIALEGRDFVRYSFVKENPKAVLVTAIAKPFRLYEHFIKARACYFFKDHYEFKKEELENLLKKHNCDTLMLTFKDFVKVKDFGFKCQIIELNIELKDSLREKIKTYIKEFEQ.

Position 63–70 (63–70 (SFGGNGKT)) interacts with ATP.

Belongs to the LpxK family.

The catalysed reaction is a lipid A disaccharide + ATP = a lipid IVA + ADP + H(+). Its pathway is glycolipid biosynthesis; lipid IV(A) biosynthesis; lipid IV(A) from (3R)-3-hydroxytetradecanoyl-[acyl-carrier-protein] and UDP-N-acetyl-alpha-D-glucosamine: step 6/6. Its function is as follows. Transfers the gamma-phosphate of ATP to the 4'-position of a tetraacyldisaccharide 1-phosphate intermediate (termed DS-1-P) to form tetraacyldisaccharide 1,4'-bis-phosphate (lipid IVA). The polypeptide is Tetraacyldisaccharide 4'-kinase (Campylobacter jejuni subsp. jejuni serotype O:6 (strain 81116 / NCTC 11828)).